Consider the following 101-residue polypeptide: Small ribosomal subunit protein uS14 (101 aa).

This sequence belongs to the universal ribosomal protein uS14 family. As to quaternary structure, part of the 30S ribosomal subunit. Contacts proteins S3 and S10.

In terms of biological role, binds 16S rRNA, required for the assembly of 30S particles and may also be responsible for determining the conformation of the 16S rRNA at the A site. The chain is Small ribosomal subunit protein uS14 from Cupriavidus pinatubonensis (strain JMP 134 / LMG 1197) (Cupriavidus necator (strain JMP 134)).